The chain runs to 228 residues: Ion-translocating oxidoreductase complex subunit E (228 aa).

5 helical membrane passes run 24 to 44, 73 to 93, 95 to 115, 130 to 150, and 184 to 204; these read LLGL…LGLG, VFVL…NAFF, ELYL…AIIG, LADG…LGAL, and GFLL…LIAL.

The protein belongs to the NqrDE/RnfAE family. The complex is composed of six subunits: RnfA, RnfB, RnfC, RnfD, RnfE and RnfG.

The protein resides in the cell inner membrane. Functionally, part of a membrane-bound complex that couples electron transfer with translocation of ions across the membrane. This chain is Ion-translocating oxidoreductase complex subunit E, found in Thioalkalivibrio sulfidiphilus (strain HL-EbGR7).